Consider the following 188-residue polypeptide: Putative manganese efflux pump MntP (188 aa).

A run of 6 helical transmembrane segments spans residues 3–23 (FYAL…VALA), 35–55 (IAAT…AGWV), 63–83 (FISE…GLKM), 104–126 (WMTV…GLAF), 140–160 (MATT…GVLF), and 167–187 (AGGL…LGLI).

The protein belongs to the MntP (TC 9.B.29) family.

It localises to the cell inner membrane. In terms of biological role, probably functions as a manganese efflux pump. This is Putative manganese efflux pump MntP from Neisseria meningitidis serogroup B (strain ATCC BAA-335 / MC58).